The chain runs to 350 residues: MAQQAPDREKALELALAQIDKNFGKGSVMRLGEDVRPPIAVIPTGSIALDVALGIGGLPRGRVIEIYGPESSGKTTVALHAVANAQAAGGIAAFIDAEHALDPDYAKKLGVDTDALLVSQPDTGEQALEIADMLIRSGALDILVIDSVAALVPRAEIEGEMGDSHVGLQARLMSQALRKMTGALNNSGTTAIFINQLREKIGVMFGSPETTTGGKALKFYSSVRLDVRRIETLKDGTDAVGNRTRVKVVKNKVSPPFKQAEFDILYGKGISREGSLIDMGVEQGFIRKSGSWFTYDGEQLGQGKENARNFLLQNPDVGNEIEKKIKEKLGIGAQLTDDVADDALPAPVDF.

Residue 68 to 75 (GPESSGKT) coordinates ATP.

Belongs to the RecA family.

The protein resides in the cytoplasm. Can catalyze the hydrolysis of ATP in the presence of single-stranded DNA, the ATP-dependent uptake of single-stranded DNA by duplex DNA, and the ATP-dependent hybridization of homologous single-stranded DNAs. It interacts with LexA causing its activation and leading to its autocatalytic cleavage. This is Protein RecA from Mycolicibacterium gilvum (strain PYR-GCK) (Mycobacterium gilvum (strain PYR-GCK)).